Reading from the N-terminus, the 88-residue chain is Large ribosomal subunit protein eL37 (88 aa).

Residues 1-24 (MTKGTTSFGKRHNKSHTQCRRCGR) form a disordered region. Over residues 9 to 24 (GKRHNKSHTQCRRCGR) the composition is skewed to basic residues. Positions 19, 22, 34, and 37 each coordinate Zn(2+). The C4-type zinc finger occupies 19–37 (CRRCGRKSYHIQKKTCSSC).

It belongs to the eukaryotic ribosomal protein eL37 family. Zn(2+) is required as a cofactor.

Binds to the 23S rRNA. In Schistosoma mansoni (Blood fluke), this protein is Large ribosomal subunit protein eL37 (RPL37).